A 2637-amino-acid polypeptide reads, in one-letter code: Nonribisomal peptide synthetase valB (2637 aa).

Residues 1–376 (MADGADYTQR…KALIRSPPST (376 aa)) form a condensation 1 region. Residues 413-803 (SQASRRPDAA…VGRRDNQIKL (391 aa)) are adenylation 1. A Carrier 1 domain is found at 946–1022 (PPANPPERAL…EAASEIKEPT (77 aa)). Serine 983 carries the O-(pantetheine 4'-phosphoryl)serine modification. Residues 1016-1045 (SEIKEPTDASAPSPSPISRDLPLQKSNHDR) form a disordered region. Positions 1063–1506 (VEAIYPCTAL…LSRADMSLLQ (444 aa)) are condensation 2. The segment at 1524-1933 (AREVAHQRPL…EGRKDTRVKL (410 aa)) is adenylation 2. Residues 2078–2154 (KEVTDDQAFM…YMVSKTSVSN (77 aa)) enclose the Carrier 2 domain. Serine 2115 bears the O-(pantetheine 4'-phosphoryl)serine mark. Residues 2193–2582 (ESVAPATDAQ…LWMGAYLDAA (390 aa)) are condensation 3.

It belongs to the NRP synthetase family.

The protein operates within secondary metabolite biosynthesis. Its function is as follows. Nonribisomal peptide synthetase; part of the gene cluster that mediates the biosynthesis of valactamides. The first step of the pathway is performed by the highly reducing polyketide synthase valA that produces the polyketide part of the final products. An acetyl starter unit is incorporated by the ketosynthase domain of valA, and subsequently 6 malonyl-CoA-derived ketide units are incorporated and fully reduced to their respective alkane forms by the action of the ketoreductase, dehydratase, and enoylreductase domains (except for the penultimate unit, which is reduced only to the alkene). The final five ketide units are each proposed to be alpha-methylated by the methyltransferase domain before ketone reduction by the ketoreductase domain. The C1 domain of the nonribisomal peptide synthetase valB then catalyzes amide bond formation between the heptaketide chain and L-valine (L-Val) attached to the T1 domain. The C2 domain incorporating L-isoleucine (L-Ile) then carries out chain elongation, which is followed by macrolactonization by the Ct domain to release the final product. This chain is Nonribisomal peptide synthetase valB, found in Aspergillus terreus.